The following is a 213-amino-acid chain: Leucyl/phenylalanyl-tRNA--protein transferase (213 aa).

Belongs to the L/F-transferase family.

The protein localises to the cytoplasm. It catalyses the reaction N-terminal L-lysyl-[protein] + L-leucyl-tRNA(Leu) = N-terminal L-leucyl-L-lysyl-[protein] + tRNA(Leu) + H(+). The catalysed reaction is N-terminal L-arginyl-[protein] + L-leucyl-tRNA(Leu) = N-terminal L-leucyl-L-arginyl-[protein] + tRNA(Leu) + H(+). The enzyme catalyses L-phenylalanyl-tRNA(Phe) + an N-terminal L-alpha-aminoacyl-[protein] = an N-terminal L-phenylalanyl-L-alpha-aminoacyl-[protein] + tRNA(Phe). Its function is as follows. Functions in the N-end rule pathway of protein degradation where it conjugates Leu, Phe and, less efficiently, Met from aminoacyl-tRNAs to the N-termini of proteins containing an N-terminal arginine or lysine. The protein is Leucyl/phenylalanyl-tRNA--protein transferase of Campylobacter lari (strain RM2100 / D67 / ATCC BAA-1060).